A 313-amino-acid chain; its full sequence is tRNA pseudouridine synthase B (313 aa).

The Nucleophile role is filled by aspartate 48.

Belongs to the pseudouridine synthase TruB family. Type 1 subfamily.

The enzyme catalyses uridine(55) in tRNA = pseudouridine(55) in tRNA. Functionally, responsible for synthesis of pseudouridine from uracil-55 in the psi GC loop of transfer RNAs. This is tRNA pseudouridine synthase B from Saccharophagus degradans (strain 2-40 / ATCC 43961 / DSM 17024).